Here is a 283-residue protein sequence, read N- to C-terminus: Pantothenate synthetase (283 aa).

30-37 (MGYLHDGH) contacts ATP. The Proton donor role is filled by histidine 37. Glutamine 61 is a (R)-pantoate binding site. Residue glutamine 61 participates in beta-alanine binding. Residue 147 to 150 (GKKD) coordinates ATP. Residue glutamine 153 coordinates (R)-pantoate. ATP is bound by residues isoleucine 176 and 184–187 (MSSR).

It belongs to the pantothenate synthetase family. As to quaternary structure, homodimer.

The protein localises to the cytoplasm. The enzyme catalyses (R)-pantoate + beta-alanine + ATP = (R)-pantothenate + AMP + diphosphate + H(+). It functions in the pathway cofactor biosynthesis; (R)-pantothenate biosynthesis; (R)-pantothenate from (R)-pantoate and beta-alanine: step 1/1. Catalyzes the condensation of pantoate with beta-alanine in an ATP-dependent reaction via a pantoyl-adenylate intermediate. In Geobacter sulfurreducens (strain ATCC 51573 / DSM 12127 / PCA), this protein is Pantothenate synthetase.